A 907-amino-acid polypeptide reads, in one-letter code: Leucine-rich repeat-containing G-protein coupled receptor 5 (907 aa).

Positions 1-21 (MDTSCVHMLLSLLALLQLVAA) are cleaved as a signal peptide. Topologically, residues 22 to 561 (GSSPGPDAIP…EHLFGSWLIR (540 aa)) are extracellular. An LRRNT domain is found at 25–66 (PGPDAIPRGCPSHCHCELDGRMLLRVDCSDLGLSELPSNLSV). 2 disulfides stabilise this stretch: Cys34/Cys40 and Cys38/Cys52. Residues Asn63 and Asn77 are each glycosylated (N-linked (GlcNAc...) asparagine). LRR repeat units follow at residues 67 to 88 (FTSY…LLHR), 91 to 112 (FLEE…AFTG), 115 to 136 (SLKV…ALQN), 139 to 160 (SLQS…CFSG), 163 to 184 (SLRH…AFRS), 187 to 208 (ALQA…AFGN), 211 to 232 (SLVV…CFDG), 235 to 256 (SLET…IKTL), 258 to 279 (NLKE…AFVG), 282 to 303 (SLIT…AFQH), 306 to 325 (ELRT…PHLT), 329 to 350 (TLES…VCDQ), 353 to 374 (NLQV…SGCQ), 375 to 396 (KLQK…TFQQ), 399 to 420 (NLRS…AFST), and 423 to 446 (SLIK…HGLT). The N-linked (GlcNAc...) asparagine glycan is linked to Asn208. The cysteines at positions 348 and 373 are disulfide-linked. The cysteines at positions 479 and 541 are disulfide-linked. Residues 562-582 (IGVWTTAVLALSCNALVALTV) traverse the membrane as a helical segment. Residues 583–593 (FRTPLYISSIK) are Cytoplasmic-facing. Residues 594 to 614 (LLIGVIAVVDILMGVSSAVLA) traverse the membrane as a helical segment. Topologically, residues 615-638 (AVDAFTFGRFAQHGAWWEDGIGCQ) are extracellular. The cysteines at positions 637 and 712 are disulfide-linked. The helical transmembrane segment at 639–659 (IVGFLSIFASESSIFLLTLAA) threads the bilayer. Over 660-682 (LERGFSVKCSSKFEVKAPLFSLR) the chain is Cytoplasmic. Residues 683-703 (AIVLLCVLLALTIATIPLLGG) traverse the membrane as a helical segment. Residues 704 to 723 (SKYNASPLCLPLPFGEPSTT) lie on the Extracellular side of the membrane. A helical membrane pass occupies residues 724–744 (GYMVALVLLNSLCFLIMTIAY). At 745–767 (TKLYCSLEKGELENLWDCSMVKH) the chain is on the cytoplasmic side. Residues 768 to 788 (IALLLFANCILYCPVAFLSFS) form a helical membrane-spanning segment. Residues 789–802 (SLLNLTFISPDVIK) lie on the Extracellular side of the membrane. The N-linked (GlcNAc...) asparagine glycan is linked to Asn792. Residues 803–823 (FILLVIVPLPSCLNPLLYIVF) traverse the membrane as a helical segment. Residues 824–907 (NPHFKEDMGS…LSSVAFVPCL (84 aa)) are Cytoplasmic-facing.

It belongs to the G-protein coupled receptor 1 family. As to quaternary structure, identified in a complex composed of RNF43, LGR5 and RSPO1. Also interacts with other R-spondin ligands, including RSPO2, RSPO3 and RSPO4. In terms of tissue distribution, expressed in the intestinal epithelium (at protein level). Expressed in the gonads, the adrenal gland, and in the brain. In the central nervous system expression is restricted to the olfactory bulb. In the adrenal gland detected only in the neural-crest derived chromaffin cells of the medulla, but not in the cells of the adrenal cortex. In the gonads, the expression is high in Graafian follicle, but absent from primary and secondary follicles. In the intestine, exclusively expressed in cycling crypt base columnar cells. Expressed in the lower bulge and secondary germ area of telogen hair follicles and in the lower outer root sheath of anagen hair follicle.

It localises to the cell membrane. The protein resides in the golgi apparatus. It is found in the trans-Golgi network membrane. Receptor for R-spondins that potentiates the canonical Wnt signaling pathway and acts as a stem cell marker of the intestinal epithelium and the hair follicle. Upon binding to R-spondins (RSPO1, RSPO2, RSPO3 or RSPO4), associates with phosphorylated LRP6 and frizzled receptors that are activated by extracellular Wnt receptors, triggering the canonical Wnt signaling pathway to increase expression of target genes. In contrast to classical G-protein coupled receptors, does not activate heterotrimeric G-proteins to transduce the signal. Involved in the development and/or maintenance of the adult intestinal stem cells during postembryonic development. This is Leucine-rich repeat-containing G-protein coupled receptor 5 (Lgr5) from Mus musculus (Mouse).